Here is a 413-residue protein sequence, read N- to C-terminus: CCA-adding enzyme (413 aa).

The ATP site is built by Ser42 and Lys45. Residues Ser42 and Lys45 each contribute to the CTP site. Mg(2+) is bound by residues Asp54, Asp56, and Asp107. Residues His130, Lys150, and Tyr159 each contribute to the ATP site. Residues His130, Lys150, and Tyr159 each contribute to the CTP site.

It belongs to the tRNA nucleotidyltransferase/poly(A) polymerase family. Archaeal CCA-adding enzyme subfamily. As to quaternary structure, homodimer. Requires Mg(2+) as cofactor.

The enzyme catalyses a tRNA precursor + 2 CTP + ATP = a tRNA with a 3' CCA end + 3 diphosphate. It catalyses the reaction a tRNA with a 3' CCA end + 2 CTP + ATP = a tRNA with a 3' CCACCA end + 3 diphosphate. Functionally, catalyzes the addition and repair of the essential 3'-terminal CCA sequence in tRNAs without using a nucleic acid template. Adds these three nucleotides in the order of C, C, and A to the tRNA nucleotide-73, using CTP and ATP as substrates and producing inorganic pyrophosphate. tRNA 3'-terminal CCA addition is required both for tRNA processing and repair. Also involved in tRNA surveillance by mediating tandem CCA addition to generate a CCACCA at the 3' terminus of unstable tRNAs. While stable tRNAs receive only 3'-terminal CCA, unstable tRNAs are marked with CCACCA and rapidly degraded. The sequence is that of CCA-adding enzyme from Sulfurisphaera tokodaii (strain DSM 16993 / JCM 10545 / NBRC 100140 / 7) (Sulfolobus tokodaii).